The following is a 227-amino-acid chain: 6-phosphogluconolactonase (227 aa).

The protein belongs to the glucosamine/galactosamine-6-phosphate isomerase family. 6-phosphogluconolactonase subfamily.

It catalyses the reaction 6-phospho-D-glucono-1,5-lactone + H2O = 6-phospho-D-gluconate + H(+). It functions in the pathway carbohydrate degradation; pentose phosphate pathway; D-ribulose 5-phosphate from D-glucose 6-phosphate (oxidative stage): step 2/3. Functionally, hydrolysis of 6-phosphogluconolactone to 6-phosphogluconate. The chain is 6-phosphogluconolactonase (pgl) from Helicobacter pylori (strain J99 / ATCC 700824) (Campylobacter pylori J99).